The sequence spans 167 residues: MGVTKKPDLNDPVLRAKLAKGMGHNYYGEPAWPNDLLYISPVVILGTIACNVGLAVLEPSMIGEPADPFATPLEILPEWYFFPVFQILRTVPNKLLGVLLMVLVPTGLLTVPFLENVNKFQNPFRRPVATTVFLIGTAVALWLGIGATLPIDKSLTLGLFQVDLTVK.

Helical transmembrane passes span 36–56 (LLYISPVVILGTIACNVGLAV), 95–115 (LLGVLLMVLVPTGLLTVPFLE), and 131–151 (TVFLIGTAVALWLGIGATLPI).

This sequence belongs to the cytochrome b family. PetD subfamily. As to quaternary structure, the 4 large subunits of the cytochrome b6-f complex are cytochrome b6, subunit IV (17 kDa polypeptide, petD), cytochrome f and the Rieske protein, while the 4 small subunits are petG, petL, petM and petN. The complex functions as a dimer.

The protein localises to the plastid. Its subcellular location is the chloroplast thylakoid membrane. In terms of biological role, component of the cytochrome b6-f complex, which mediates electron transfer between photosystem II (PSII) and photosystem I (PSI), cyclic electron flow around PSI, and state transitions. In Calycanthus floridus var. glaucus (Eastern sweetshrub), this protein is Cytochrome b6-f complex subunit 4.